Consider the following 383-residue polypeptide: Cytochrome b (383 aa).

The next 4 membrane-spanning stretches (helical) occupy residues 34-54, 78-99, 114-134, and 179-199; these read FGSL…FLMM, WLIR…FLHI, WNVG…GYVL, and FTAL…THLI. Positions 84 and 98 each coordinate heme b. 2 residues coordinate heme b: H183 and H197. H202 lines the a ubiquinone pocket. Helical transmembrane passes span 227 to 247, 289 to 309, 321 to 341, and 348 to 368; these read MKDV…ALYL, LGGV…PFLH, LSQL…WIGG, and YILL…ILMP.

Belongs to the cytochrome b family. In terms of assembly, the cytochrome bc1 complex contains 3 respiratory subunits (MT-CYB, CYC1 and UQCRFS1), 2 core proteins (UQCRC1 and UQCRC2) and probably 6 low-molecular weight proteins. It depends on heme b as a cofactor.

Its subcellular location is the mitochondrion inner membrane. Functionally, component of the ubiquinol-cytochrome c reductase complex (complex III or cytochrome b-c1 complex) that is part of the mitochondrial respiratory chain. The b-c1 complex mediates electron transfer from ubiquinol to cytochrome c. Contributes to the generation of a proton gradient across the mitochondrial membrane that is then used for ATP synthesis. The polypeptide is Cytochrome b (MT-CYB) (Caiman crocodilus (Spectacled caiman)).